The following is a 210-amino-acid chain: MSAPHWLSQGTLVLASNNKGKITEFEKLFAELQLPVDVIPQGQLNIPDAIEDGLSFVENAIIKARHASKISGKPAIADDSGICVPVLGGAPGIYSARYAGDHGNDAANNEKLLHDLKPFRNAEQAIQGMFVCVLALVEHAEDPLPQIFQGFWHGEILEQARGEHGFGYDPLFWLSELKMSSAEMSKEEKNKISHRGQAMQRFRESLMTRE.

A substrate-binding site is contributed by 16–21 (SNNKGK). Asp79 (proton acceptor) is an active-site residue. Residue Asp79 coordinates Mg(2+). Residues Ser80, 166–169 (FGYD), Lys189, and 194–195 (HR) contribute to the substrate site.

Belongs to the HAM1 NTPase family. Homodimer. Mg(2+) serves as cofactor.

The enzyme catalyses XTP + H2O = XMP + diphosphate + H(+). It catalyses the reaction dITP + H2O = dIMP + diphosphate + H(+). It carries out the reaction ITP + H2O = IMP + diphosphate + H(+). Functionally, pyrophosphatase that catalyzes the hydrolysis of nucleoside triphosphates to their monophosphate derivatives, with a high preference for the non-canonical purine nucleotides XTP (xanthosine triphosphate), dITP (deoxyinosine triphosphate) and ITP. Seems to function as a house-cleaning enzyme that removes non-canonical purine nucleotides from the nucleotide pool, thus preventing their incorporation into DNA/RNA and avoiding chromosomal lesions. This Acinetobacter baylyi (strain ATCC 33305 / BD413 / ADP1) protein is dITP/XTP pyrophosphatase.